Consider the following 190-residue polypeptide: Elongation factor P-like protein (190 aa).

Belongs to the elongation factor P family.

In Pectobacterium atrosepticum (strain SCRI 1043 / ATCC BAA-672) (Erwinia carotovora subsp. atroseptica), this protein is Elongation factor P-like protein.